The primary structure comprises 405 residues: Diaminopimelate decarboxylase (405 aa).

Residue Lys-46 is modified to N6-(pyridoxal phosphate)lysine. Residues Gly-225 and Glu-259–Arg-262 contribute to the pyridoxal 5'-phosphate site. Substrate contacts are provided by Arg-262, Arg-298, and Tyr-302. The active-site Proton donor is Cys-329. Glu-330 and Tyr-358 together coordinate substrate. A pyridoxal 5'-phosphate-binding site is contributed by Tyr-358.

This sequence belongs to the Orn/Lys/Arg decarboxylase class-II family. LysA subfamily. In terms of assembly, homodimer. Pyridoxal 5'-phosphate serves as cofactor.

It catalyses the reaction meso-2,6-diaminopimelate + H(+) = L-lysine + CO2. The protein operates within amino-acid biosynthesis; L-lysine biosynthesis via DAP pathway; L-lysine from DL-2,6-diaminopimelate: step 1/1. Functionally, specifically catalyzes the decarboxylation of meso-diaminopimelate (meso-DAP) to L-lysine. This is Diaminopimelate decarboxylase from Helicobacter pylori (strain J99 / ATCC 700824) (Campylobacter pylori J99).